Reading from the N-terminus, the 266-residue chain is Isopentenyl phosphate kinase (266 aa).

5–9 (KLGGS) contacts ATP. Residue alanine 47 coordinates substrate. Glycine 48 is an ATP binding site. Residues histidine 52 and glycine 157 each contribute to the substrate site. Residues aspartate 178, 183-188 (YTRNPK), glycine 219, and lysine 223 contribute to the ATP site.

It belongs to the isopentenyl phosphate kinase family. In terms of assembly, homodimer.

It carries out the reaction isopentenyl phosphate + ATP = isopentenyl diphosphate + ADP. Functionally, catalyzes the formation of isopentenyl diphosphate (IPP), the building block of all isoprenoids. Has lower activity with dimethylallyl phosphate (DMAP) and isopentenyl thiolophosphate (ISP). Has low activity with 1-butyl phosphate (BP) and 3-buten-1-yl phosphate (BEP). Has no significant activity with geranyl phosphate (in vitro). The chain is Isopentenyl phosphate kinase from Methanothermobacter thermautotrophicus (strain ATCC 29096 / DSM 1053 / JCM 10044 / NBRC 100330 / Delta H) (Methanobacterium thermoautotrophicum).